The sequence spans 214 residues: 3-isopropylmalate dehydratase small subunit (214 aa).

It belongs to the LeuD family. LeuD type 1 subfamily. Heterodimer of LeuC and LeuD.

The enzyme catalyses (2R,3S)-3-isopropylmalate = (2S)-2-isopropylmalate. It functions in the pathway amino-acid biosynthesis; L-leucine biosynthesis; L-leucine from 3-methyl-2-oxobutanoate: step 2/4. Functionally, catalyzes the isomerization between 2-isopropylmalate and 3-isopropylmalate, via the formation of 2-isopropylmaleate. In Pseudomonas putida (strain GB-1), this protein is 3-isopropylmalate dehydratase small subunit.